Reading from the N-terminus, the 102-residue chain is Ribonuclease P protein component 1 (102 aa).

This sequence belongs to the eukaryotic/archaeal RNase P protein component 1 family. In terms of assembly, consists of a catalytic RNA component and at least 4-5 protein subunits.

Its subcellular location is the cytoplasm. The enzyme catalyses Endonucleolytic cleavage of RNA, removing 5'-extranucleotides from tRNA precursor.. Functionally, part of ribonuclease P, a protein complex that generates mature tRNA molecules by cleaving their 5'-ends. This chain is Ribonuclease P protein component 1, found in Archaeoglobus fulgidus (strain ATCC 49558 / DSM 4304 / JCM 9628 / NBRC 100126 / VC-16).